The primary structure comprises 130 residues: ATP synthase epsilon chain (130 aa).

It belongs to the ATPase epsilon chain family. F-type ATPases have 2 components, CF(1) - the catalytic core - and CF(0) - the membrane proton channel. CF(1) has five subunits: alpha(3), beta(3), gamma(1), delta(1), epsilon(1). CF(0) has three main subunits: a, b and c.

Its subcellular location is the cell inner membrane. Functionally, produces ATP from ADP in the presence of a proton gradient across the membrane. This Fuscovulum blasticum (Rhodobacter blasticus) protein is ATP synthase epsilon chain (atpC).